Here is a 979-residue protein sequence, read N- to C-terminus: Translation initiation factor IF-2 (979 aa).

Basic and acidic residues predominate over residues 50–77 (LKRSHGQSDDSARKKITLTKRETSEIRQ). The tract at residues 50 to 385 (LKRSHGQSDD…GKHNADDARS (336 aa)) is disordered. Residues 78–87 (SDSTGKTRTV) show a composition bias toward polar residues. Basic and acidic residues-rich tracts occupy residues 98–109 (IKRDDVESHGDG), 121–142 (EEVR…RQEA), and 149–173 (EAAE…RRQA). Positions 174–192 (ELLAQKAAEEAAAAQAAAD) are enriched in low complexity. Basic and acidic residues-rich tracts occupy residues 196–211 (ETAR…RLAT), 219–263 (NADD…EAEA), and 280–291 (PSERKAEEKKAE). The segment covering 317-327 (APAATTTTAAA) has biased composition (low complexity). A compositionally biased stretch (gly residues) spans 351-368 (GGGLKTRGDSSGGVGGWR). Residues 479–646 (PRPPVVTVMG…NVLLQAEVLE (168 aa)) enclose the tr-type G domain. The G1 stretch occupies residues 488–495 (GHVDHGKT). Residue 488-495 (GHVDHGKT) coordinates GTP. A G2 region spans residues 513–517 (GITQH). A G3 region spans residues 534–537 (DTPG). GTP contacts are provided by residues 534 to 538 (DTPGH) and 588 to 591 (TKVD). The G4 stretch occupies residues 588-591 (TKVD). The G5 stretch occupies residues 624-626 (SAK).

The protein belongs to the TRAFAC class translation factor GTPase superfamily. Classic translation factor GTPase family. IF-2 subfamily.

The protein localises to the cytoplasm. Functionally, one of the essential components for the initiation of protein synthesis. Protects formylmethionyl-tRNA from spontaneous hydrolysis and promotes its binding to the 30S ribosomal subunits. Also involved in the hydrolysis of GTP during the formation of the 70S ribosomal complex. This Cupriavidus metallidurans (strain ATCC 43123 / DSM 2839 / NBRC 102507 / CH34) (Ralstonia metallidurans) protein is Translation initiation factor IF-2.